Reading from the N-terminus, the 1441-residue chain is Tripeptidyl-peptidase 2 (1441 aa).

The disordered stretch occupies residues 62–89 (AESSERSNSSKKTTNKEQSDKSAESRMA). Over residues 75–85 (TNKEQSDKSAE) the composition is skewed to basic and acidic residues. The 502-residue stretch at 107–608 (ETGVLNFLQK…HGLLNVEKAF (502 aa)) folds into the Peptidase S8 domain. Active-site charge relay system residues include Asp131, His359, and Ser549. Residues 1139–1155 (TANGAKPKAPATPQAAT) show a composition bias toward low complexity. Disordered regions lie at residues 1139–1190 (TANG…KANA) and 1255–1274 (QKTS…EDQK). Ser1182 carries the post-translational modification Phosphoserine. Over residues 1265-1274 (SADKQKEDQK) the composition is skewed to basic and acidic residues.

It belongs to the peptidase S8 family. As to quaternary structure, homooligomer; forms a complex of 6 MDa probably composed of 40 subunits. Forms a structure consisting of 2 segmented and twisted strands that form a spindle-shaped structure. Each strand is composed of 10 segments (a segment being a homodimer oriented head to head), stacking of these segments leads to the formation of a twisted single strand. 2 strands compose the fully assembled spindle.

It is found in the cytoplasm. It catalyses the reaction Release of an N-terminal tripeptide from a polypeptide.. With respect to regulation, inhibited by phenylmethanesulfonyl fluoride (PMSF) and butabindide, but not by peptidase inhibitor pepstatin, EDTA, nor bestatin. Its function is as follows. Component of the proteolytic cascade acting downstream of the 26S proteasome in the ubiquitin-proteasome pathway. Efficiently cleaves Ala-Ala-Ala-polypeptide and Pro-Pro-Ala-polypeptide, Val-Leu-Lys-polypeptide only at high concentration. Does not cleave Ala-Phe-Pro-polypeptide nor Pro-Leu-Gly-polypeptide. The chain is Tripeptidyl-peptidase 2 (TppII) from Drosophila melanogaster (Fruit fly).